Reading from the N-terminus, the 80-residue chain is Calmodulin (80 aa).

2 consecutive EF-hand domains span residues 12-47 (DSEE…LGEK) and 48-80 (LTDE…MTSK). Ca(2+) contacts are provided by Asp25, Asp27, Asn29, Glu36, Asp61, Asp63, Asp65, Gln67, and Glu72.

The protein belongs to the calmodulin family.

Calmodulin mediates the control of a large number of enzymes, ion channels and other proteins by Ca(2+). Among the enzymes to be stimulated by the calmodulin-Ca(2+) complex are a number of protein kinases and phosphatases. The polypeptide is Calmodulin (Strongylocentrotus purpuratus (Purple sea urchin)).